The sequence spans 154 residues: Large-conductance mechanosensitive channel (154 aa).

The next 2 helical transmembrane spans lie at 14-34 (VVDL…VNSL) and 86-106 (VFIN…FFVV).

Belongs to the MscL family. Homopentamer.

It is found in the cell membrane. In terms of biological role, channel that opens in response to stretch forces in the membrane lipid bilayer. May participate in the regulation of osmotic pressure changes within the cell. This Dehalococcoides mccartyi (strain ATCC BAA-2100 / JCM 16839 / KCTC 5957 / BAV1) protein is Large-conductance mechanosensitive channel.